The primary structure comprises 221 residues: GTP cyclohydrolase III (221 aa).

Belongs to the archaeal-type GTP cyclohydrolase family.

It catalyses the reaction GTP + 3 H2O = 2-amino-5-formylamino-6-(5-phospho-D-ribosylamino)pyrimidin-4(3H)-one + 2 phosphate + 2 H(+). In terms of biological role, catalyzes the formation of 2-amino-5-formylamino-6-ribofuranosylamino-4(3H)-pyrimidinone ribonucleotide monophosphate and inorganic phosphate from GTP. Also has an independent pyrophosphate phosphohydrolase activity. The polypeptide is GTP cyclohydrolase III (Pyrobaculum calidifontis (strain DSM 21063 / JCM 11548 / VA1)).